Reading from the N-terminus, the 155-residue chain is MQKHIVKDLELLAANAAAKEGFEIIRLEVLAQMKPMKIQLQIRHKNGSDVSLEDCSRLSRPIGEVIENSKLINQSYILEISSPGLSDILETDKEFATFKGFPIQVSTKNKSNSTILQNGLLHTKSKEHLLINIKGKMSKIPIDNVIQVRLASPTD.

It belongs to the RimP family.

Its subcellular location is the cytoplasm. In terms of biological role, required for maturation of 30S ribosomal subunits. This Prochlorococcus marinus (strain SARG / CCMP1375 / SS120) protein is Ribosome maturation factor RimP.